The sequence spans 796 residues: Protein translocase subunit SecA 2 (796 aa).

Residues Q84, 102 to 106 (GEGKT), and D496 each bind ATP.

It belongs to the SecA family. In terms of assembly, monomer and homodimer. Part of the essential Sec protein translocation apparatus which comprises SecA, SecYEG and auxiliary proteins SecDF. Other proteins may also be involved.

It localises to the cell membrane. The protein resides in the cytoplasm. The catalysed reaction is ATP + H2O + cellular proteinSide 1 = ADP + phosphate + cellular proteinSide 2.. Its function is as follows. Part of the Sec protein translocase complex. Interacts with the SecYEG preprotein conducting channel. Has a central role in coupling the hydrolysis of ATP to the transfer of proteins into and across the cell membrane, serving as an ATP-driven molecular motor driving the stepwise translocation of polypeptide chains across the membrane. This is Protein translocase subunit SecA 2 from Staphylococcus haemolyticus (strain JCSC1435).